Consider the following 91-residue polypeptide: Large ribosomal subunit protein uL22 (91 aa).

It belongs to the universal ribosomal protein uL22 family. In terms of assembly, part of the 50S ribosomal subunit.

In terms of biological role, this protein binds specifically to 23S rRNA; its binding is stimulated by other ribosomal proteins, e.g. L4, L17, and L20. It is important during the early stages of 50S assembly. It makes multiple contacts with different domains of the 23S rRNA in the assembled 50S subunit and ribosome. Its function is as follows. The globular domain of the protein is located near the polypeptide exit tunnel on the outside of the subunit, while an extended beta-hairpin is found that lines the wall of the exit tunnel in the center of the 70S ribosome. The chain is Large ribosomal subunit protein uL22 (rplV) from Pigeon pea witches'-broom phytoplasma.